We begin with the raw amino-acid sequence, 711 residues long: Exotoxin translocation ATP-binding protein PaxB (711 aa).

The Peptidase C39 domain maps to 1–129; that stretch reads MEPLMSFKQK…QVFQGNVILL (129 aa). 5 consecutive transmembrane segments (helical) span residues 157-177, 195-215, 273-293, 299-319, and 392-412; these read IFVE…ITPL, LNVI…LSGL, ALTS…MWYY, IVIL…SPIL, and VMII…LSIG. The ABC transmembrane type-1 domain occupies 158-440; the sequence is FVEVMIVSIF…LAQLWQDFQQ (283 aa). Residues 472 to 707 form the ABC transporter domain; that stretch reads VTFKNIRFRY…KDGLYYYLNQ (236 aa). 506–513 is a binding site for ATP; that stretch reads GRSGSGKS.

Belongs to the ABC transporter superfamily. Protein-1 exporter (TC 3.A.1.109) family. Homodimer.

The protein resides in the cell inner membrane. It catalyses the reaction ATP + H2O + proteinSide 1 = ADP + phosphate + proteinSide 2.. In terms of biological role, part of the ABC transporter complex PaxBD involved in PaxA export. Transmembrane domains (TMD) form a pore in the inner membrane and the ATP-binding domain (NBD) is responsible for energy generation. In Pasteurella aerogenes, this protein is Exotoxin translocation ATP-binding protein PaxB (paxB).